Here is a 725-residue protein sequence, read N- to C-terminus: ABC transporter G family member 7 (725 aa).

The helical transmembrane segment at 12–34 (VVSGIGGNGVGGALAAVAAALLV) threads the bilayer. The region spanning 70–316 (IRWRNITCSL…YFGNFGFLCP (247 aa)) is the ABC transporter domain. 108-115 (GPSGSGKT) lines the ATP pocket. Positions 392–603 (RQFFLLLKRA…AFQGLCINEF (212 aa)) constitute an ABC transmembrane type-2 domain. Helical transmembrane passes span 446–466 (LLQV…VGVF), 493–513 (IAEI…LYPM), 528–548 (GIVT…GAMV), and 553–573 (AAMA…GYYV). The disordered stretch occupies residues 676–725 (NSGVQLDKAEVDQTEKPEDDDINQPLDDQNQTSDSDDELDEIRPFVLEGL). Residues 682–691 (DKAEVDQTEK) are compositionally biased toward basic and acidic residues.

This sequence belongs to the ABC transporter superfamily. ABCG family. Eye pigment precursor importer (TC 3.A.1.204) subfamily.

The protein localises to the membrane. In Arabidopsis thaliana (Mouse-ear cress), this protein is ABC transporter G family member 7 (ABCG7).